The chain runs to 164 residues: Phosphopantetheine adenylyltransferase (164 aa).

A substrate-binding site is contributed by S9. ATP-binding positions include 9–10 (SF) and H17. Substrate-binding residues include K41, L74, and R88. ATP is bound by residues 89 to 91 (GIR), E99, and 124 to 130 (YAEVSST).

It belongs to the bacterial CoaD family. As to quaternary structure, homohexamer. Requires Mg(2+) as cofactor.

It is found in the cytoplasm. It catalyses the reaction (R)-4'-phosphopantetheine + ATP + H(+) = 3'-dephospho-CoA + diphosphate. It functions in the pathway cofactor biosynthesis; coenzyme A biosynthesis; CoA from (R)-pantothenate: step 4/5. Functionally, reversibly transfers an adenylyl group from ATP to 4'-phosphopantetheine, yielding dephospho-CoA (dPCoA) and pyrophosphate. This chain is Phosphopantetheine adenylyltransferase, found in Chromobacterium violaceum (strain ATCC 12472 / DSM 30191 / JCM 1249 / CCUG 213 / NBRC 12614 / NCIMB 9131 / NCTC 9757 / MK).